A 392-amino-acid polypeptide reads, in one-letter code: Protein FAM185A (392 aa).

The segment at 39 to 60 is disordered; it reads YSSGGSERWPGSETEVPPPGPG.

This chain is Protein FAM185A (FAM185A), found in Homo sapiens (Human).